The chain runs to 284 residues: Pantothenate synthetase (284 aa).

ATP is bound at residue 30–37; that stretch reads MGNLHDGH. Residue histidine 37 is the Proton donor of the active site. Glutamine 61 is a binding site for (R)-pantoate. Beta-alanine is bound at residue glutamine 61. Residue 149–152 coordinates ATP; that stretch reads GEKD. Position 155 (glutamine 155) interacts with (R)-pantoate. Residues isoleucine 178 and 186 to 189 each bind ATP; that span reads LSSR.

The protein belongs to the pantothenate synthetase family. Homodimer.

Its subcellular location is the cytoplasm. It carries out the reaction (R)-pantoate + beta-alanine + ATP = (R)-pantothenate + AMP + diphosphate + H(+). It participates in cofactor biosynthesis; (R)-pantothenate biosynthesis; (R)-pantothenate from (R)-pantoate and beta-alanine: step 1/1. Catalyzes the condensation of pantoate with beta-alanine in an ATP-dependent reaction via a pantoyl-adenylate intermediate. The chain is Pantothenate synthetase from Salmonella paratyphi A (strain ATCC 9150 / SARB42).